The primary structure comprises 74 residues: UPF0346 protein LCA_0996 (74 aa).

This sequence belongs to the UPF0346 family.

The protein is UPF0346 protein LCA_0996 of Latilactobacillus sakei subsp. sakei (strain 23K) (Lactobacillus sakei subsp. sakei).